The following is a 204-amino-acid chain: Abscisic acid receptor PYL3 (204 aa).

The tract at residues 40 to 191 is START-like; sequence HEPRDHQCSS…NLKSLAEVSE (152 aa). A disulfide bridge links C47 with C172. Abscisate-binding positions include K76, 104 to 109, 131 to 137, and E156; these read ATRSTE and RLKNYSS. The Gate loop motif lies at 100 to 104; it reads SGLPA. The Latch loop motif lies at 130–132; that stretch reads HRL.

It belongs to the PYR/PYL/RCAR abscisic acid intracellular receptor family. In terms of assembly, monomer. Interacts with PP2C50. Binding to PP2C50 is dependent on the presence of abscisic acid (ABA). Interacts with PP2C30 and PP2C53.

It is found in the cytoplasm. It localises to the cytosol. The protein resides in the nucleus. Involved in abscisic acid (ABA) signaling during seed germination and abiotic stress response. Acts as a positive regulator of ABA-mediated inhibition of seed germination, and tolerance to drought and cold stresses. Together with PP2C50 and SAPK10, may form an ABA signaling module involved in stress response. Inhibits the protein phosphatases PP2C06 and PP2C09 when activated by abscisic acid (ABA). The protein is Abscisic acid receptor PYL3 of Oryza sativa subsp. japonica (Rice).